Here is a 296-residue protein sequence, read N- to C-terminus: D-alanine--D-alanine ligase (296 aa).

One can recognise an ATP-grasp domain in the interval 103-293 (KEILMHYRMP…FDSFVKRIIE (191 aa)). Residue 129 to 180 (ISFPVAVKPSSGGSSIATFKVKSIQELKHAYEEASKYGEVMIEQWVTGKEIT) participates in ATP binding. Positions 247, 260, and 262 each coordinate Mg(2+).

This sequence belongs to the D-alanine--D-alanine ligase family. Mg(2+) is required as a cofactor. Mn(2+) serves as cofactor.

The protein localises to the cytoplasm. It catalyses the reaction 2 D-alanine + ATP = D-alanyl-D-alanine + ADP + phosphate + H(+). The protein operates within cell wall biogenesis; peptidoglycan biosynthesis. Cell wall formation. This Francisella tularensis subsp. tularensis (strain WY96-3418) protein is D-alanine--D-alanine ligase.